We begin with the raw amino-acid sequence, 244 residues long: Type I iodothyronine deiodinase (244 aa).

Residues M1–R12 are Extracellular-facing. A helical; Signal-anchor for type III membrane protein membrane pass occupies residues L13–F33. The Cytoplasmic portion of the chain corresponds to P34–S244. Residue U121 is part of the active site. A non-standard amino acid (selenocysteine) is located at residue U121.

This sequence belongs to the iodothyronine deiodinase family. As to quaternary structure, predominantly monomer. Can form homodimers but homodimerization is not essential for enzyme activity.

The protein resides in the cell membrane. It is found in the endoplasmic reticulum membrane. Its subcellular location is the basolateral cell membrane. It carries out the reaction 3,3',5-triiodo-L-thyronine + iodide + A + H(+) = L-thyroxine + AH2. It catalyses the reaction 3,3',5'-triiodo-L-thyronine + iodide + A + H(+) = L-thyroxine + AH2. The enzyme catalyses 3,3'-diiodo-L-thyronine + iodide + A + H(+) = 3,3',5'-triiodo-L-thyronine + AH2. The catalysed reaction is 3,3'-diiodo-L-thyronine + iodide + A + H(+) = 3,3',5-triiodo-L-thyronine + AH2. It carries out the reaction 3'-iodo-L-thyronine + iodide + A + H(+) = 3',5'-diiodo-L-thyronine + AH2. It catalyses the reaction 3-iodo-L-thyronine + iodide + A + H(+) = 3,5-diiodo-L-thyronine + AH2. The enzyme catalyses 3-iodo-L-thyronine + iodide + A + H(+) = 3,3'-diiodo-L-thyronine + AH2. The catalysed reaction is 3,3'-diiodothyronamine + iodide + A + H(+) = 3,3',5'-triiodothyronamine + AH2. It carries out the reaction 3'-iodothyronamine + iodide + A + H(+) = 3',5'-diiodothyronamine + AH2. It catalyses the reaction 3-iodothyronamine + iodide + A + H(+) = 3,3'-diiodothyronamine + AH2. The enzyme catalyses 3,3'-diiodothyronamine + iodide + A + H(+) = 3,3',5-triiodothyronamine + AH2. The catalysed reaction is 3-iodothyronamine + iodide + A + H(+) = 3,5-diiodothyronamine + AH2. It carries out the reaction 3,3'-diiodo-L-thyronine sulfate + iodide + A + H(+) = 3,3',5'-triiodo-L-thyronine sulfate + AH2. It catalyses the reaction 3,3',5'-triiodo-L-thyronine sulfate + iodide + A + H(+) = L-thyroxine sulfate + AH2. The enzyme catalyses 3,3'-diiodo-L-thyronine sulfate + iodide + A + H(+) = 3,3',5-triiodo-L-thyronine sulfate + AH2. Plays a crucial role in the metabolism of thyroid hormones (TH) and has specific roles in TH activation and inactivation by deiodination. Catalyzes the deiodination of L-thyroxine (T4) to 3,5,3'-triiodothyronine (T3) and 3',5'-diiodothyronine (3',5'-T2) to 3'-monoiodothyronine (3'-T1) via outer-ring deiodination (ORD). Catalyzes the deiodination of T4 to 3,3',5'-triiodothyronine (rT3), T3 to 3,3'-diiodothyronine (3,3'-T2), 3,5-diiodothyronine (3,5-T2) to 3-monoiodothyronine (3-T1) and 3,3'-T2 to 3-T1 via inner-ring deiodination (IRD). Catalyzes the deiodination of rT3 to 3,3'-T2 via ORD. Catalyzes the phenolic ring deiodinations of 3,3',5'-triiodothyronamine, 3',5'-diiodothyronamine and 3,3'-diiodothyronamine as well as tyrosyl ring deiodinations of 3,5,3'-triiodothyronamine and 3,5-diiodothyronamine. Catalyzes the deiodination of L-thyroxine sulfate and 3,3',5-triiodo-L-thyronine sulfate via IRD and of 3,3',5'-triiodo-L-thyronine sulfate via ORD. This Felis catus (Cat) protein is Type I iodothyronine deiodinase (DIO1).